Here is a 509-residue protein sequence, read N- to C-terminus: MQSWSRVYCSLAKRGHFNRISHGLQGLSAVPLRTYADQLIDADVTVIGSGPGGYVAAIKAAQLGFKTVCVEKNETLGGTCLNVGCIPSKALLNNSHYYHMAHGKDFASRGIEMSEVRLNLDKMMEQKSTAVKALTGGIAHLFKQNKVIHVNGYGKITGKNQVTATKVDGGTQVVDTKNILIATGSEVTPFPGITIDEDTIVSSTGALSLKKVPEKMVVIGAGVIGVELGSVWQRLGADVTAVEFLGHVGGIGIDMEISKNFQRILQKQGFKFKLNTKVTGATKKSDGKIDVSIEAASGGKAEVITCDVLLVCIGRRPFTKNLGLEELGIELDPRGRIPVNTRFQTKIPNIYAIGDVVAGPMLAHKAEDEGIICVEGMAGGAVHIDYNCVPSVIYTHPEVAWVGKSEEQLKEEGIEYKVGKFPFAANSRAKTNADTDGMVKILGQKSTDRVLGAHILGPGAGEMVNEAALALEYGASCEDIARVCHAHPTLSEAFREANLAASFGKSINF.

The transit peptide at 1 to 35 (MQSWSRVYCSLAKRGHFNRISHGLQGLSAVPLRTY) directs the protein to the mitochondrion. K66 carries the post-translational modification N6-acetyllysine; alternate. An N6-succinyllysine; alternate modification is found at K66. FAD contacts are provided by residues 71 to 80 (EKNETLGGTC) and K89. C80 and C85 are disulfide-bonded. K104, K122, K132, and K143 each carry N6-acetyllysine; alternate. Residues K104, K122, K132, and K143 each carry the N6-succinyllysine; alternate modification. G154 serves as a coordination point for FAD. N6-succinyllysine is present on residues K159 and K166. 183–185 (TGS) is a binding site for FAD. NAD(+)-binding positions include 220-227 (GAGVIGVE) and E243. N6-succinyllysine occurs at positions 273 and 277. V278 is an NAD(+) binding site. 2 positions are modified to phosphoserine: S285 and S297. G314 is an NAD(+) binding site. Residue K346 is modified to N6-acetyllysine. Residues D355 and 361-364 (MLAH) contribute to the FAD site. The residue at position 410 (K410) is an N6-acetyllysine; alternate. At K410 the chain carries N6-succinyllysine; alternate. 2 positions are modified to N6-acetyllysine: K417 and K420. Position 430 is an N6-succinyllysine (K430). Residue H487 is the Proton acceptor of the active site. Position 502 is a phosphoserine (S502). K505 carries the N6-acetyllysine; alternate modification. K505 bears the N6-succinyllysine; alternate mark.

The protein belongs to the class-I pyridine nucleotide-disulfide oxidoreductase family. In terms of assembly, homodimer. Part of the multimeric pyruvate dehydrogenase complex that contains multiple copies of pyruvate dehydrogenase (subunits PDHA (PDHA1 or PDHA2) and PDHB, E1), dihydrolipoamide acetyltransferase (DLAT, E2) and lipoamide dehydrogenase (DLD, E3). These subunits are bound to an inner core composed of about 48 DLAT and 12 PDHX molecules (by non covalent bonds). The 2-oxoglutarate dehydrogenase complex is composed of OGDH (2-oxoglutarate dehydrogenase; E1), DLST (dihydrolipoamide succinyltransferase; E2), DLD (dihydrolipoamide dehydrogenase; E3) and the assembly factor KGD4. It contains multiple copies of the three enzymatic components (E1, E2 and E3). In the nucleus, the 2-oxoglutarate dehydrogenase complex associates with KAT2A. Interacts with PDHX. The cofactor is FAD. Tyrosine phosphorylated.

Its subcellular location is the mitochondrion matrix. The protein resides in the nucleus. The protein localises to the cell projection. It is found in the cilium. It localises to the flagellum. Its subcellular location is the cytoplasmic vesicle. The protein resides in the secretory vesicle. The protein localises to the acrosome. The catalysed reaction is N(6)-[(R)-dihydrolipoyl]-L-lysyl-[protein] + NAD(+) = N(6)-[(R)-lipoyl]-L-lysyl-[protein] + NADH + H(+). Lipoamide dehydrogenase is a component of the glycine cleavage system as well as an E3 component of three alpha-ketoacid dehydrogenase complexes (pyruvate-, alpha-ketoglutarate-, and branched-chain amino acid-dehydrogenase complex). The 2-oxoglutarate dehydrogenase complex is mainly active in the mitochondrion. A fraction of the 2-oxoglutarate dehydrogenase complex also localizes in the nucleus and is required for lysine succinylation of histones: associates with KAT2A on chromatin and provides succinyl-CoA to histone succinyltransferase KAT2A. In monomeric form may have additional moonlighting function as serine protease. Involved in the hyperactivation of spermatazoa during capacitation and in the spermatazoal acrosome reaction. The polypeptide is Dihydrolipoyl dehydrogenase, mitochondrial (DLD) (Macaca fascicularis (Crab-eating macaque)).